Reading from the N-terminus, the 356-residue chain is 11-beta-hydroxysteroid dehydrogenase (356 aa).

Residues 10-30 (LVVPPAGLLMLAFAWPSLAFF) form a helical; Signal-anchor for type II membrane protein membrane-spanning segment. The Proline-knob signature appears at 13-26 (PPAGLLMLAFAWPS). Position 54-85 (54-85 (GASSGIGEQIAYQYAKRRANLVLVARREHRLR)) interacts with NADP(+). Ser-184 serves as a coordination point for substrate. Catalysis depends on Tyr-197, which acts as the Proton acceptor. NADP(+)-binding positions include 197–201 (YNAAK) and Lys-201.

Belongs to the short-chain dehydrogenases/reductases (SDR) family. As to expression, expressed in megagametophytes (at protein level).

It is found in the lipid droplet. Its subcellular location is the membrane. The enzyme catalyses an 11beta-hydroxysteroid + NADP(+) = an 11-oxosteroid + NADPH + H(+). It catalyses the reaction corticosterone + NADP(+) = 11-dehydrocorticosterone + NADPH + H(+). The catalysed reaction is 17beta-estradiol + NADP(+) = estrone + NADPH + H(+). Its function is as follows. Has dehydrogenase activity against corticosterone (11 beta-hydroxysteroid) and estradiol (17 beta-hydroxysteroid) in the presence of NADP(+). May be involved in signal transduction regulated by various sterols. This is 11-beta-hydroxysteroid dehydrogenase from Pinus massoniana (Chinese red pine).